The primary structure comprises 179 residues: Large ribosomal subunit protein uL5 (179 aa).

The protein belongs to the universal ribosomal protein uL5 family. Part of the 50S ribosomal subunit; part of the 5S rRNA/L5/L18/L25 subcomplex. Contacts the 5S rRNA and the P site tRNA. Forms a bridge to the 30S subunit in the 70S ribosome.

Functionally, this is one of the proteins that bind and probably mediate the attachment of the 5S RNA into the large ribosomal subunit, where it forms part of the central protuberance. In the 70S ribosome it contacts protein S13 of the 30S subunit (bridge B1b), connecting the 2 subunits; this bridge is implicated in subunit movement. Contacts the P site tRNA; the 5S rRNA and some of its associated proteins might help stabilize positioning of ribosome-bound tRNAs. In Pseudomonas aeruginosa (strain LESB58), this protein is Large ribosomal subunit protein uL5.